Consider the following 297-residue polypeptide: 6-dehydroglucose reductase (297 aa).

Residues tryptophan 20, arginine 21, and aspartate 49 each contribute to the NADP(+) site. Catalysis depends on tyrosine 54, which acts as the Proton donor. D-glucose-binding residues include tyrosine 54, lysine 98, histidine 129, and arginine 130. Serine 159, asparagine 160, glutamine 181, serine 211, leucine 213, glycine 215, glycine 261, threonine 262, asparagine 263, and arginine 267 together coordinate NADP(+).

The protein belongs to the aldo/keto reductase family. As to quaternary structure, homotrimer.

The catalysed reaction is D-glucose + NADP(+) = 6-dehydro-D-glucose + NADPH + H(+). Part of the sulfoquinovose monooxygenase (sulfo-SMO) pathway, a D-sulfoquinovose degradation pathway that enables the complete utilization of all carbons within sulfoquinovose (SQ) with concomitant production of inorganic sulfite. Catalyzes the NADP-dependent reduction of 6-dehydro-D-glucose to D-glucose. Cannot use NADH. This chain is 6-dehydroglucose reductase, found in Agrobacterium fabrum (strain C58 / ATCC 33970) (Agrobacterium tumefaciens (strain C58)).